The primary structure comprises 82 residues: uncharacterized protein (82 aa).

Positions 1 to 19 (MKNLLKILLIIAFANPVFA) are cleaved as a signal peptide.

This is an uncharacterized protein from Rickettsia prowazekii (strain Madrid E).